Consider the following 358-residue polypeptide: U5 small nuclear ribonucleoprotein 40 kDa protein (358 aa).

Residue lysine 18 forms a Glycyl lysine isopeptide (Lys-Gly) (interchain with G-Cter in SUMO2) linkage. Arginine 21 is modified (asymmetric dimethylarginine). WD repeat units follow at residues 65 to 104, 108 to 147, 150 to 190, 192 to 231, 234 to 273, 284 to 323, and 326 to 358; these read GHEG…DNYA, GHSG…RVKR, GHTS…AVQT, QNTY…LTYT, GHAD…PKER, NFEK…VLYK, and GHAG…GEIQ. A Glycyl lysine isopeptide (Lys-Gly) (interchain with G-Cter in SUMO2) cross-link involves residue lysine 271.

Component of the pre-catalytic and catalytic spliceosome complexes. Component of the postcatalytic spliceosome P complex. Part of the U5 snRNP complex. Interacts with PRPF8. Component of the U4/U6-U5 tri-snRNP complex composed of the U4, U6 and U5 snRNAs and at least PRPF3, PRPF4, PRPF6, PRPF8, PRPF31, SNRNP200, TXNL4A, WDR57, SNRNP40, DDX23, CD2BP2, PPIH, SNU13, EFTUD2, SART1 and USP39. Component of the minor spliceosome, which splices U12-type introns.

It localises to the nucleus. In terms of biological role, required for pre-mRNA splicing as component of the activated spliceosome. Component of the U5 small nuclear ribonucleoprotein (snRNP) complex and the U4/U6-U5 tri-snRNP complex, building blocks of the spliceosome. As a component of the minor spliceosome, involved in the splicing of U12-type introns in pre-mRNAs. This chain is U5 small nuclear ribonucleoprotein 40 kDa protein (Snrnp40), found in Mus musculus (Mouse).